A 279-amino-acid polypeptide reads, in one-letter code: 2-dehydro-3-deoxyphosphooctonate aldolase (279 aa).

It belongs to the KdsA family.

The protein resides in the cytoplasm. The enzyme catalyses D-arabinose 5-phosphate + phosphoenolpyruvate + H2O = 3-deoxy-alpha-D-manno-2-octulosonate-8-phosphate + phosphate. Its pathway is carbohydrate biosynthesis; 3-deoxy-D-manno-octulosonate biosynthesis; 3-deoxy-D-manno-octulosonate from D-ribulose 5-phosphate: step 2/3. The protein operates within bacterial outer membrane biogenesis; lipopolysaccharide biosynthesis. This Desulfosudis oleivorans (strain DSM 6200 / JCM 39069 / Hxd3) (Desulfococcus oleovorans) protein is 2-dehydro-3-deoxyphosphooctonate aldolase.